Here is a 174-residue protein sequence, read N- to C-terminus: DNA-directed RNA polymerase IV subunit 7 (174 aa).

Belongs to the eukaryotic RPB7/RPC8 RNA polymerase subunit family. Component of the RNA polymerase IV complex. Interacts with NRPD1.

The protein resides in the nucleus. Its function is as follows. DNA-dependent RNA polymerase catalyzes the transcription of DNA into RNA using the four ribonucleoside triphosphates as substrates. Component of RNA polymerase IV which mediates 24-nt short-interfering RNAs (siRNA) accumulation. Implicated in siRNA-directed heterochromatin formation through the action of DCL3 and AGO4, and subsequent DNA methylation-dependent silencing of targeted sequences. Essential component of a self-reinforcing loop coupling de novo DNA methylation to siRNA production. Required for intercellular but not intracellular RNA interference (RNAi) leading to systemic post-transcriptional gene silencing. Involved in the maintenance of post-transcriptional RNA silencing. The chain is DNA-directed RNA polymerase IV subunit 7 (NRPD7) from Arabidopsis thaliana (Mouse-ear cress).